We begin with the raw amino-acid sequence, 1268 residues long: Vigilin (1268 aa).

Serine 2 carries the N-acetylserine modification. Threonine 8 carries the phosphothreonine modification. Residues serine 11, serine 31, and serine 35 each carry the phosphoserine modification. KH domains are found at residues 150 to 212 (QASA…RHEV), 222 to 284 (RAVK…VARI), 295 to 357 (TTTI…LTEV), 364 to 424 (FTVS…QEQI), 435 to 497 (MDYV…KREL), 507 to 570 (ERTK…TKYM), and 581 to 643 (SYSI…RSRI). Phosphothreonine occurs at positions 295 and 296. Serine 317 is subject to Phosphoserine. Position 437 is a phosphotyrosine (tyrosine 437). Serine 645 is modified (phosphoserine). KH domains follow at residues 653 to 716 (IAEV…KKQL), 727 to 790 (SFTV…QKEL), 800 to 863 (VVED…KKRI), 873 to 967 (QVTL…KEAL), 972 to 1034 (PVTI…KAGL), 1052 to 1117 (SFKL…RDAI), and 1127 to 1190 (MVSE…IDHI). The disordered stretch occupies residues 910 to 946 (PDREENPVHSVEPSIQENGDEAGEGREAKETDPGSPR). Residues 932-946 (GEGREAKETDPGSPR) show a composition bias toward basic and acidic residues. Lysine 991 is modified (N6-acetyllysine). The disordered stretch occupies residues 1214–1268 (PAHEESKAPSKGFVVRDAPWTSNSSEKAPDMSSSEEIPTFGAQVAPKTLPWGPKR). Residues 1233–1249 (WTSNSSEKAPDMSSSEE) show a composition bias toward polar residues. The residue at position 1247 (serine 1247) is a Phosphoserine.

Its subcellular location is the cytoplasm. The protein resides in the nucleus. Functionally, appears to play a role in cell sterol metabolism. It may function to protect cells from over-accumulation of cholesterol. The sequence is that of Vigilin (Hdlbp) from Rattus norvegicus (Rat).